We begin with the raw amino-acid sequence, 510 residues long: Inner membrane protein YeeR (510 aa).

M1 is a topological domain (cytoplasmic). Residues L2–F22 traverse the membrane as a helical segment. Topologically, residues R23–S30 are periplasmic. A helical transmembrane segment spans residues A31–T51. Residues E52 to R61 lie on the Cytoplasmic side of the membrane. Residues W62–D82 form a helical membrane-spanning segment. Over G83–D94 the chain is Periplasmic. Residues S95–I115 form a helical membrane-spanning segment. The Cytoplasmic portion of the chain corresponds to K116–Y136. A helical membrane pass occupies residues C137 to L157. Residues Q158–S164 lie on the Periplasmic side of the membrane. Residues L165 to A185 form a helical membrane-spanning segment. The Cytoplasmic segment spans residues S186 to R510.

Its subcellular location is the cell inner membrane. The chain is Inner membrane protein YeeR (yeeR) from Escherichia coli (strain K12).